A 445-amino-acid chain; its full sequence is tRNA-2-methylthio-N(6)-dimethylallyladenosine synthase (445 aa).

The 122-residue stretch at 3 to 124 (KKLYIKTYGC…LPELISKVVR (122 aa)) folds into the MTTase N-terminal domain. Residues Cys12, Cys48, Cys87, Cys162, Cys166, and Cys169 each contribute to the [4Fe-4S] cluster site. One can recognise a Radical SAM core domain in the interval 148-380 (YPQGASSFIS…QQELTAQQLA (233 aa)). A TRAM domain is found at 383-445 (ESCVGSIMKV…ASNSLTGEVI (63 aa)).

It belongs to the methylthiotransferase family. MiaB subfamily. Monomer. The cofactor is [4Fe-4S] cluster.

Its subcellular location is the cytoplasm. The catalysed reaction is N(6)-dimethylallyladenosine(37) in tRNA + (sulfur carrier)-SH + AH2 + 2 S-adenosyl-L-methionine = 2-methylsulfanyl-N(6)-dimethylallyladenosine(37) in tRNA + (sulfur carrier)-H + 5'-deoxyadenosine + L-methionine + A + S-adenosyl-L-homocysteine + 2 H(+). Its function is as follows. Catalyzes the methylthiolation of N6-(dimethylallyl)adenosine (i(6)A), leading to the formation of 2-methylthio-N6-(dimethylallyl)adenosine (ms(2)i(6)A) at position 37 in tRNAs that read codons beginning with uridine. This chain is tRNA-2-methylthio-N(6)-dimethylallyladenosine synthase, found in Rickettsia felis (strain ATCC VR-1525 / URRWXCal2) (Rickettsia azadi).